The primary structure comprises 299 residues: Probable lipid kinase YegS (299 aa).

In terms of domain architecture, DAGKc spans 2 to 133 (ANFPASLLIL…IDMARVNDKT (132 aa)). ATP contacts are provided by residues Thr40, 66 to 72 (GDGTINE), and Thr95. Mg(2+)-binding residues include Leu215, Asp218, and Leu220. Residue Glu271 is the Proton acceptor of the active site.

The protein belongs to the diacylglycerol/lipid kinase family. YegS lipid kinase subfamily. Requires Mg(2+) as cofactor. Ca(2+) serves as cofactor.

The protein localises to the cytoplasm. Its function is as follows. Probably phosphorylates lipids; the in vivo substrate is unknown. The sequence is that of Probable lipid kinase YegS from Salmonella gallinarum (strain 287/91 / NCTC 13346).